We begin with the raw amino-acid sequence, 428 residues long: Proline--tRNA ligase (428 aa).

This sequence belongs to the class-II aminoacyl-tRNA synthetase family. ProS type 2 subfamily. As to quaternary structure, homodimer.

It localises to the cytoplasm. The catalysed reaction is tRNA(Pro) + L-proline + ATP = L-prolyl-tRNA(Pro) + AMP + diphosphate. Catalyzes the attachment of proline to tRNA(Pro) in a two-step reaction: proline is first activated by ATP to form Pro-AMP and then transferred to the acceptor end of tRNA(Pro). This is Proline--tRNA ligase from Rickettsia typhi (strain ATCC VR-144 / Wilmington).